Here is a 49-residue protein sequence, read N- to C-terminus: Large ribosomal subunit protein bL33C (49 aa).

It belongs to the bacterial ribosomal protein bL33 family.

The sequence is that of Large ribosomal subunit protein bL33C from Bacillus pumilus (strain SAFR-032).